The chain runs to 172 residues: Large ribosomal subunit protein uL10 (172 aa).

It belongs to the universal ribosomal protein uL10 family. In terms of assembly, part of the ribosomal stalk of the 50S ribosomal subunit. The N-terminus interacts with L11 and the large rRNA to form the base of the stalk. The C-terminus forms an elongated spine to which L12 dimers bind in a sequential fashion forming a multimeric L10(L12)X complex.

Functionally, forms part of the ribosomal stalk, playing a central role in the interaction of the ribosome with GTP-bound translation factors. The polypeptide is Large ribosomal subunit protein uL10 (Prosthecochloris aestuarii (strain DSM 271 / SK 413)).